The sequence spans 961 residues: Probable exosome complex exonuclease RRP44 (961 aa).

A PINc domain is found at 73-188 (HALIVDSTSL…LVFDEDSKKR (116 aa)). Residues 232–338 (IFDEYLSHDR…DEENDDENDE (107 aa)) enclose the CSD1 domain. A disordered region spans residues 322 to 346 (ADDMGNEDEENDDENDEPKAKKSKK). The segment covering 325–337 (MGNEDEENDDEND) has biased composition (acidic residues). One can recognise a CSD2 domain in the interval 381 to 447 (LFCPAERLIP…ENEVLLLEHD (67 aa)). In terms of domain architecture, RNB spans 479–809 (RVDLRDLTIC…IVHRLLAAAI (331 aa)).

The protein belongs to the RNR ribonuclease family. As to quaternary structure, component of the RNA exosome complex. As to expression, ubiquitously expressed.

Its subcellular location is the nucleus. The protein resides in the nucleoplasm. In terms of biological role, putative catalytic component of the RNA exosome complex which has 3'-&gt;5' exoribonuclease activity and participates in a multitude of cellular RNA processing and degradation events. Has both 3'-5' exonuclease and endonuclease activities. Involved in regulation of antisense ribosomal siRNA production. In Caenorhabditis elegans, this protein is Probable exosome complex exonuclease RRP44 (dis-3).